Reading from the N-terminus, the 437-residue chain is Aspartate--tRNA(Asp/Asn) ligase (437 aa).

An L-aspartate-binding site is contributed by glutamate 175. Residues 197–200 (QLYK) are aspartate. Arginine 219 contacts L-aspartate. ATP is bound by residues 219–221 (RAE), 227–229 (RHL), and glutamate 360. Mg(2+) contacts are provided by glutamate 360 and serine 363. L-aspartate-binding residues include serine 363 and arginine 367. ATP is bound at residue 408–411 (GAER).

It belongs to the class-II aminoacyl-tRNA synthetase family. Type 2 subfamily. As to quaternary structure, homodimer. Mg(2+) is required as a cofactor.

The protein resides in the cytoplasm. The catalysed reaction is tRNA(Asx) + L-aspartate + ATP = L-aspartyl-tRNA(Asx) + AMP + diphosphate. Aspartyl-tRNA synthetase with relaxed tRNA specificity since it is able to aspartylate not only its cognate tRNA(Asp) but also tRNA(Asn). Reaction proceeds in two steps: L-aspartate is first activated by ATP to form Asp-AMP and then transferred to the acceptor end of tRNA(Asp/Asn). In Methanothermobacter thermautotrophicus (strain ATCC 29096 / DSM 1053 / JCM 10044 / NBRC 100330 / Delta H) (Methanobacterium thermoautotrophicum), this protein is Aspartate--tRNA(Asp/Asn) ligase.